Here is a 545-residue protein sequence, read N- to C-terminus: Chaperonin GroEL (545 aa).

Residues 29 to 32 (TLGP), K50, 86 to 90 (DGTTT), G413, 479 to 481 (NAA), and D496 contribute to the ATP site. A disordered region spans residues 525–545 (KPEKEKAPAAAGAPDMGGMDF). Over residues 532-545 (PAAAGAPDMGGMDF) the composition is skewed to low complexity.

This sequence belongs to the chaperonin (HSP60) family. Forms a cylinder of 14 subunits composed of two heptameric rings stacked back-to-back. Interacts with the co-chaperonin GroES.

Its subcellular location is the cytoplasm. It catalyses the reaction ATP + H2O + a folded polypeptide = ADP + phosphate + an unfolded polypeptide.. In terms of biological role, together with its co-chaperonin GroES, plays an essential role in assisting protein folding. The GroEL-GroES system forms a nano-cage that allows encapsulation of the non-native substrate proteins and provides a physical environment optimized to promote and accelerate protein folding. The chain is Chaperonin GroEL from Deinococcus geothermalis (strain DSM 11300 / CIP 105573 / AG-3a).